The sequence spans 192 residues: Fe/S biogenesis protein NfuA (192 aa).

[4Fe-4S] cluster contacts are provided by Cys-149 and Cys-152.

Belongs to the NfuA family. In terms of assembly, homodimer. It depends on [4Fe-4S] cluster as a cofactor.

Functionally, involved in iron-sulfur cluster biogenesis. Binds a 4Fe-4S cluster, can transfer this cluster to apoproteins, and thereby intervenes in the maturation of Fe/S proteins. Could also act as a scaffold/chaperone for damaged Fe/S proteins. In Shewanella oneidensis (strain ATCC 700550 / JCM 31522 / CIP 106686 / LMG 19005 / NCIMB 14063 / MR-1), this protein is Fe/S biogenesis protein NfuA.